We begin with the raw amino-acid sequence, 203 residues long: DNA-directed RNA polymerase subunit gamma (203 aa).

Zn(2+)-binding residues include C34, C36, C49, and C52.

This sequence belongs to the RNA polymerase beta' chain family. RpoC1 subfamily. As to quaternary structure, in cyanobacteria the RNAP catalytic core is composed of 2 alpha, 1 beta, 1 beta', 1 gamma and 1 omega subunit. When a sigma factor is associated with the core the holoenzyme is formed, which can initiate transcription. Zn(2+) is required as a cofactor.

The enzyme catalyses RNA(n) + a ribonucleoside 5'-triphosphate = RNA(n+1) + diphosphate. Its function is as follows. DNA-dependent RNA polymerase catalyzes the transcription of DNA into RNA using the four ribonucleoside triphosphates as substrates. In Prochloron sp, this protein is DNA-directed RNA polymerase subunit gamma (rpoC1).